Here is a 13041-residue protein sequence, read N- to C-terminus: Nonribosomal peptide synthetase kk1B (13041 aa).

The segment at 267 to 663 (ANRVVDTPQK…GRRDSQIKIR (397 aa)) is adenylation 1. Residues 788 to 864 (ASLMTEGITL…GLINVMQQSS (77 aa)) enclose the Carrier 1 domain. Residue Ser-825 is modified to O-(pantetheine 4'-phosphoryl)serine. The interval 882-1313 (SFAQGRLWFL…TPIAHLQLTD (432 aa)) is condensation 1. Positions 1341–1736 (FQKQVAACPN…GRMDFQIKIR (396 aa)) are adenylation 2. One can recognise a Carrier 2 domain in the interval 1865–1939 (AARNEIEAVL…NLAATIKRGS (75 aa)). Residue Ser-1899 is modified to O-(pantetheine 4'-phosphoryl)serine. The segment at 1957–2383 (SFAQGRLWFL…DQPQTPLALL (427 aa)) is condensation 2. The segment at 2418-2812 (QVAASPNATA…GRMDQQIKIR (395 aa)) is adenylation 3. The interval 2891–3023 (VGNDFMGWTS…EYLSKVLYAL (133 aa)) is methyltransferase (M) domain 1. The Carrier 3 domain maps to 3353 to 3427 (GARNETEAVL…DLAASIRRGS (75 aa)). Position 3387 is an O-(pantetheine 4'-phosphoryl)serine (Ser-3387). The condensation 3 stretch occupies residues 3445–3869 (SFAQGRLWFL…DQPQIPIAVL (425 aa)). Residues 3901 to 4300 (FRAQVVACPD…GRMDQQVKIR (400 aa)) form an adenylation 4 region. A Carrier 4 domain is found at 4412-4486 (PPRNEIETIL…NLAAAVQRGS (75 aa)). Ser-4446 is subject to O-(pantetheine 4'-phosphoryl)serine. The interval 4504-4935 (SFAQGRLWFL…TPIAALSLTD (432 aa)) is condensation 4. The tract at residues 4963 to 5362 (FREQVATYPD…GRMDRQLKIR (400 aa)) is adenylation 5. The tract at residues 5430–5567 (TYAELDTLVK…VAQYFPTPEY (138 aa)) is methyltransferase (M) domain 2. The 75-residue stretch at 5897–5971 (QPRNEVEAVL…DLAAAIQRGS (75 aa)) folds into the Carrier 5 domain. Ser-5931 is modified (O-(pantetheine 4'-phosphoryl)serine). The tract at residues 5989–6416 (SYAQGRLWFL…DQPQTPLALL (428 aa)) is condensation 5. An adenylation 6 region spans residues 6451 to 6845 (QVAASPNATA…GRMDQQIKIR (395 aa)). The segment at 6924–7056 (VGNDFMGWTS…EYLSKVLYAL (133 aa)) is methyltransferase (M) domain 3. The region spanning 7386–7460 (GARNEIEAAL…DLAGAVQRGS (75 aa)) is the Carrier 6 domain. Ser-7420 bears the O-(pantetheine 4'-phosphoryl)serine mark. The condensation 6 stretch occupies residues 7478-7901 (SFAQGRLWFL…GLETPRLPIS (424 aa)). The segment at 7934–8335 (FRTQVAASPD…GRMDRQLKIR (402 aa)) is adenylation 7. Positions 8404–8540 (YAEIEEIDSS…AQYFPSPEYL (137 aa)) are methyltransferase (M) domain 4. Residues 8871 to 8945 (GPRNEIEALL…DLAASIQRGS (75 aa)) enclose the Carrier 7 domain. Position 8905 is an O-(pantetheine 4'-phosphoryl)serine (Ser-8905). The tract at residues 8963–9392 (SFAQGRLWFL…PKTPIAVLPL (430 aa)) is condensation 7. Residues 9422–9822 (FRQQVAARPD…SRMDQQVKIR (401 aa)) are adenylation 8. Residues 9943–10017 (PPTNDMERIL…DLASTIKQDS (75 aa)) enclose the Carrier 8 domain. Ser-9977 carries the O-(pantetheine 4'-phosphoryl)serine modification. Positions 10035–10462 (SFAQGRLWFL…ETPQTPLAVL (428 aa)) are condensation 8. Residues 10494–10892 (FRAQVAACPD…GRMDQQIKIR (399 aa)) are adenylation 9. Residues 10959–11105 (IYAEIEEIDS…EYLADVVGAL (147 aa)) are methyltransferase (M) domain 5. In terms of domain architecture, Carrier 9 spans 11428 to 11502 (SARNEVEAVL…DLAASIERNS (75 aa)). Position 11462 is an O-(pantetheine 4'-phosphoryl)serine (Ser-11462). A condensation 9 region spans residues 11520–11945 (SFAQGRLWFL…EQPQTPIAVL (426 aa)). Residues 11977–12377 (FRDQVAANPR…GRMDQQIKIR (401 aa)) form an adenylation 10 region. The 75-residue stretch at 12495 to 12569 (VPRNELEASL…DLALKVSSYI (75 aa)) folds into the Carrier 10 domain. Ser-12529 is subject to O-(pantetheine 4'-phosphoryl)serine. Positions 12647 to 13032 (FPANADCDKI…RMHEEFCDII (386 aa)) are condensation 10.

This sequence belongs to the NRP synthetase family.

Its pathway is secondary metabolite biosynthesis. Its function is as follows. Nonribosomal peptide synthetase; part of the gene cluster that mediates the biosynthesis of KK-1, a novel cyclic depsipeptide with 10 residues which is a promising active compound with high activity against many plant pathogens, especially Botrytis cinerea. The nonribosomal peptide synthetase (NRPS) kk1B catalyzes the elongation and cyclization of the decapeptide chain composed of 1 D-lactic acid residue (D-Lac), 1 pipecolic acid residue (Pip), 1 aspartic acid residue (Asp), 1 isoleucine residue (Ile), 1 glycine residue (Gly), 1 tyrosine residue (Tyr) and 4 valine residues (Val). The Asp, Ile and 3 Val residues are N-methylated by the 5 methyltransferase domains from the NRPS (found in modules 3, 5, 6, 7 and 9), whereas the Tyr residue is O-methylated by the cluster encoded O-methyltransferase kk1A. Cyclization with the hydroxy group of the D-lactic acid as a nucleophile is presumed to occur in the final module of NRPS, resulting in the formation of the depsipeptide ester bond through macrocyclization by the C-terminal C domain. The thioesterase kk1J is likely to be involved in the corrective mechanism of peptide chain synthesis. The D-lactate dehydrogenase kk1H is involved in the synthesis of D-lactic acid from pyruvic acid, which is recognized by the A domain of the first kk1B module. The pyrroline-5-carboxylate reductase kk1I is involved in the synthesis of the L-pipecolic acid residue of KK-1 from delta-1-pyrroline-5-carboxylate (P5C), a metabolic intermediate of lysine. It is still unclear how kk1C and kk1D are involved in the production of KK-1. The sequence is that of Nonribosomal peptide synthetase kk1B from Curvularia clavata.